The sequence spans 452 residues: Maltoporin (452 aa).

An N-terminal signal peptide occupies residues 1 to 25; it reads MMITLRKLPLAVAVAAGVMSAQAMA.

It belongs to the porin LamB (TC 1.B.3) family. In terms of assembly, homotrimer formed of three 18-stranded antiparallel beta-barrels, containing three independent channels.

Its subcellular location is the cell outer membrane. The enzyme catalyses beta-maltose(in) = beta-maltose(out). Functionally, involved in the transport of maltose and maltodextrins. The chain is Maltoporin from Salmonella paratyphi A (strain ATCC 9150 / SARB42).